The following is a 259-amino-acid chain: UBX domain-containing protein 2A (259 aa).

The required for interaction with CHRNA3 stretch occupies residues 1-151 (MKDVDNLKSI…SATPKIVSKA (151 aa)). The segment at 1–164 (MKDVDNLKSI…EVENKNNLSA (164 aa)) is required for inhibition of CHRNA3 ubiquitination and translocation of CHRNA3 to the plasma membrane resulting in an increase in acetylcholine-gated nicotinic acetylcholine receptor currents. Residues 60-124 (QVDVNIKLWK…VEDKKNEICL (65 aa)) enclose the SEP domain. A required for interaction with VCP region spans residues 167–259 (LNNLEPITNI…TASFRELSEH (93 aa)). A UBX domain is found at 169-246 (NLEPITNIQI…DLQNAVIIQR (78 aa)).

Part of a complex composed of STUB1/CHIP, VCP/p97, CHRNA3, and UBXN2A that modulates the ubiquitination and endoplasmic reticulum-associated degradation (ERAD) of CHRNA3. Within the complex UBXN2A acts as a scaffold protein required for the interaction of CHRNA3 with VCP/p97, this interaction also inhibits CHRNA3 ubiquitination by STUB1/CHIP and subsequently ERAD. Interacts (via SEP domain) with CHRNA3 and interacts (via UBX domain) with VCP/P97; these interactions are required for the interaction of CHRNA3 with the STUB1-VCP-UBXN2A complex. Interacts with HSPA9/MOT-2 (via SBD domain); the interaction inhibits HSPA9/MOT-2 interaction with and degradation of p53, thereby promotes p53 translocation to the nucleus. Interacts with RICTOR. Ubiquitinated. Expressed in the colon (at protein level).

It is found in the golgi apparatus. It localises to the endoplasmic reticulum. Its subcellular location is the perikaryon. The protein resides in the cell projection. The protein localises to the dendrite. It is found in the nucleus. It localises to the cytoplasm. Acts to repress the ubiquitination and subsequent endoplasmic reticulum-associated degradation of CHRNA3 by the STUB1-VCP-UBXN2A complex in cortical neurons. Also acts to promote the translocation of CHRNA3 to the plasma membrane and subsequently increases plasma membrane acetylcholine-gated ion-channel activation. Plays a role in the inhibition of STUB1-mediated TP53 degradation, via its interaction with HSPA9 which acts to inhibit TP53 binding to HSPA9. Positively mediates the ubiquitination and proteosomal degradation of RICTOR, may thereby act as a negative regulator of the mTORC2 pathway. In Homo sapiens (Human), this protein is UBX domain-containing protein 2A.